A 762-amino-acid polypeptide reads, in one-letter code: Cellulose synthase-like protein H2 (762 aa).

The span at 1–15 shows a compositional bias: low complexity; that stretch reads MAVVAAAAATGSTTR. The interval 1-39 is disordered; sequence MAVVAAAAATGSTTRSGGGGGEGTRSGRKKPPPPPLQER. Transmembrane regions (helical) follow at residues 47 to 67 and 81 to 101; these read AWAW…LLAL and GVWR…ALNV. Active-site residues include aspartate 180 and aspartate 470. Transmembrane regions (helical) follow at residues 541–561, 582–602, 619–639, 673–693, 708–728, and 739–759; these read LAYL…CYGL, FSVP…EYMA, IISV…SLGL, LPVF…VTVG, APGI…FPFV, and GIPW…VTFC.

This sequence belongs to the glycosyltransferase 2 family. Plant cellulose synthase-like H subfamily.

The protein localises to the golgi apparatus membrane. Thought to be a Golgi-localized beta-glycan synthase that polymerize the backbones of noncellulosic polysaccharides (hemicelluloses) of plant cell wall. The sequence is that of Cellulose synthase-like protein H2 (CSLH2) from Oryza sativa subsp. japonica (Rice).